A 158-amino-acid chain; its full sequence is MAEEKKHYMTLEGKKKLEEELEYLKTERRKEVVERIKIARSFGDLSENSEYDSAKEEQAFVEGRISQIEKMIRNAEIIEESEGDANVVSLGKTVKFVEIPDGEEEEYTIVGSAESDPFEGKISNDSPMAQSLLGHTIDDVVIVNTPGGEMEVKILEIR.

Residues 10-76 (TLEGKKKLEE…QIEKMIRNAE (67 aa)) adopt a coiled-coil conformation.

This sequence belongs to the GreA/GreB family.

Functionally, necessary for efficient RNA polymerase transcription elongation past template-encoded arresting sites. The arresting sites in DNA have the property of trapping a certain fraction of elongating RNA polymerases that pass through, resulting in locked ternary complexes. Cleavage of the nascent transcript by cleavage factors such as GreA or GreB allows the resumption of elongation from the new 3'terminus. GreA releases sequences of 2 to 3 nucleotides. This Halalkalibacterium halodurans (strain ATCC BAA-125 / DSM 18197 / FERM 7344 / JCM 9153 / C-125) (Bacillus halodurans) protein is Transcription elongation factor GreA.